The primary structure comprises 519 residues: Protein disulfide-isomerase A5 (519 aa).

Positions Met1 to Leu21 are cleaved as a signal peptide. Cystine bridges form between Cys85–Cys94, Cys182–Cys185, Cys305–Cys308, and Cys426–Cys429. Thioredoxin domains lie at Phe134 to Pro261, Pro270 to Ala384, and Trp378 to Glu506. The Prevents secretion from ER signature appears at Lys516–Leu519.

This sequence belongs to the protein disulfide isomerase family. As to quaternary structure, interacts with CALR (via P-domain).

The protein resides in the endoplasmic reticulum lumen. The catalysed reaction is Catalyzes the rearrangement of -S-S- bonds in proteins.. The sequence is that of Protein disulfide-isomerase A5 (PDIA5) from Homo sapiens (Human).